Reading from the N-terminus, the 136-residue chain is Magnetite biomineralization protein Mms6 (136 aa).

Residues 1–85 (MGEMEREGAT…AVGGTIWSGK (85 aa)) lie on the Cytoplasmic side of the membrane. The GL repeat stretch occupies residues 86–95 (GLALGLGMGL). Residues 86 to 106 (GLALGLGMGLGAWGPLILGVV) form a helical membrane-spanning segment. Topologically, residues 107 to 136 (GAGAVYAYMKSRDIEAAQSDEEVELRDALS) are lumenal. Residues 115–136 (MKSRDIEAAQSDEEVELRDALS) are MIC, self-assembles, binds magnetite, Fe(2+) and Fe(3+).

Belongs to the magnetosome Mms6 family. In terms of assembly, full length protein oligomerizes and interacts with MamA. May undergo cleavage.

It is found in the magnetosome membrane. Its function is as follows. Promotes the formation of magnetite in Fe(2+)-rich conditions, when magnetite is not readily formed. Binds both Fe(2+) and Fe(3+). May help control the production of crystals with a specific morphology. May function with MamX, MamY amd MamZ in biomineralization. The 4 genes of this operon collectively influence magnetosome size and number. The polypeptide is Magnetite biomineralization protein Mms6 (Magnetospirillum gryphiswaldense (strain DSM 6361 / JCM 21280 / NBRC 15271 / MSR-1)).